We begin with the raw amino-acid sequence, 1112 residues long: Cytosolic carboxypeptidase 4 (1112 aa).

A disordered region spans residues 291-345; sequence TTEPPHDLPEEDFEDDGDDEVDKDSDTEDGKVEDDDLETDVNKLSSKPGLDRPEE. The span at 299–329 shows a compositional bias: acidic residues; that stretch reads PEEDFEDDGDDEVDKDSDTEDGKVEDDDLET. Residues 732 to 1022 enclose the Peptidase M14 domain; it reads YPYTYTALMT…HPVDGLQGLQ (291 aa). His-804, Glu-807, and His-901 together coordinate Zn(2+). The Proton donor/acceptor role is filled by Glu-986.

It belongs to the peptidase M14 family. In terms of assembly, interacts with MYLK. Interacts with TCF4. It depends on Zn(2+) as a cofactor. As to expression, expressed in corneal endothelium.

It is found in the cytoplasm. The protein resides in the cytosol. It catalyses the reaction (L-glutamyl)(n+1)-gamma-L-glutamyl-L-glutamyl-[protein] + H2O = (L-glutamyl)(n)-gamma-L-glutamyl-L-glutamyl-[protein] + L-glutamate. The enzyme catalyses C-terminal L-alpha-aminoacyl-L-glutamyl-L-glutamyl-[tubulin] + H2O = C-terminal L-alpha-aminoacyl-L-glutamyl-[tubulin] + L-glutamate. Functionally, metallocarboxypeptidase that mediates deglutamylation of tubulin and non-tubulin target proteins. Catalyzes the removal of polyglutamate side chains present on the gamma-carboxyl group of glutamate residues within the C-terminal tail of tubulin protein. Specifically cleaves tubulin long-side-chains, while it is not able to remove the branching point glutamate. Also catalyzes the removal of polyglutamate residues from the carboxy-terminus of non-tubulin proteins such as MYLK. In Homo sapiens (Human), this protein is Cytosolic carboxypeptidase 4.